Reading from the N-terminus, the 334-residue chain is Putative fatty acid elongase 1 (334 aa).

The Lumenal portion of the chain corresponds to 1-51; the sequence is MDLTGAHMLKIHRPSIDHPFGVDLWHLFEQLSIKTIGWNPSEFEYIPGKTP. The helical transmembrane segment at 52 to 72 threads the bilayer; sequence MSQWSSVIVSITAYYVIILSG. The Cytoplasmic segment spans residues 73-86; sequence RAIMTNRKPLKQRR. A helical membrane pass occupies residues 87–107; it reads LFQLHNFILTIISGALLALLV. Residues 108-135 lie on the Lumenal side of the membrane; sequence EEVFRNYMRNGLFYCVCDSRHFTQRLVT. A helical transmembrane segment spans residues 136–156; that stretch reads LYYLNYLTKYLELMDTVFLFL. The Cytoplasmic portion of the chain corresponds to 157 to 160; sequence KKKP. Residues 161 to 181 form a helical membrane-spanning segment; the sequence is LAFLHCYHHGITALLCFTQLL. At 182–187 the chain is on the lumenal side; sequence GRTSVQ. Residues 188 to 208 traverse the membrane as a helical segment; it reads WGVIGLNLYVHVIMYSYYFLA. Over 209-224 the chain is Cytoplasmic; the sequence is ACGRRVWWKQWVTRVQ. Residues 225–245 form a helical membrane-spanning segment; that stretch reads IIQFVLDLILCYFGTYSHIAF. Over 246–260 the chain is Lumenal; that stretch reads RYFPWLPHVGDCSGS. The helical transmembrane segment at 261 to 281 threads the bilayer; sequence LFAAFFGCGVLSSYLFLFIGF. The Cytoplasmic segment spans residues 282 to 334; sequence YINTYIKRGAKKNQRKAAGKADNTSVAAAAGSEALAATTATNASPFSARSRKL. Serine 325 is subject to Phosphoserine.

Belongs to the ELO family.

Its subcellular location is the endoplasmic reticulum membrane. It carries out the reaction a very-long-chain acyl-CoA + malonyl-CoA + H(+) = a very-long-chain 3-oxoacyl-CoA + CO2 + CoA. Functionally, may be involved in the synthesis of very long chain fatty acids. The protein is Putative fatty acid elongase 1 of Schizosaccharomyces pombe (strain 972 / ATCC 24843) (Fission yeast).